A 317-amino-acid polypeptide reads, in one-letter code: Melanocyte-stimulating hormone receptor (317 aa).

Over 1-37 the chain is Extracellular; sequence MPVQGSQRRLLGSLNSTPTATPHLGLAANQTGAWCLE. The N-linked (GlcNAc...) asparagine glycan is linked to asparagine 29. Residues 38-63 form a helical membrane-spanning segment; that stretch reads VSIPDGLFLSLGLVSLVENVLVVTAI. At 64 to 72 the chain is on the cytoplasmic side; sequence AKNRNLHSP. Residues 73 to 93 form a helical membrane-spanning segment; the sequence is MYCFICCLALSDLLVSGSNML. At 94-118 the chain is on the extracellular side; it reads ETAVTLLLEAGALAARAAVVQQLDN. A helical transmembrane segment spans residues 119-140; the sequence is VIDVITCSSMLSSLCFLGAIAV. The Cytoplasmic segment spans residues 141-163; the sequence is DRYISIFYALRYHSIVTLPRARR. The helical transmembrane segment at 164-183 threads the bilayer; that stretch reads AVAAIWVASVLFSMLFIAYY. Over 184–191 the chain is Extracellular; that stretch reads DHAAVLLC. The helical transmembrane segment at 192–211 threads the bilayer; the sequence is LVVFFLAMLVLMAVLYVHML. Residues 212-240 lie on the Cytoplasmic side of the membrane; sequence ARACQHAQGIARLHKRQRPAHQGFGLKGA. A helical transmembrane segment spans residues 241-266; that stretch reads ATLTILLGIFFLCWGPFFLHLTLIVL. Residues 267 to 279 are Extracellular-facing; it reads CPQHPTCSCIFKN. Residues 280–300 form a helical membrane-spanning segment; sequence FNLFLALIICNAIIDPLIYAF. Over 301-317 the chain is Cytoplasmic; it reads RSQELRRTLKEVLLCSW. Cysteine 315 carries the S-palmitoyl cysteine lipid modification.

Belongs to the G-protein coupled receptor 1 family. Interacts with MGRN1, but does not undergo MGRN1-mediated ubiquitination; this interaction competes with GNAS-binding and thus inhibits agonist-induced cAMP production. Interacts with OPN3; the interaction results in a decrease in MC1R-mediated cAMP signaling and ultimately a decrease in melanin production in melanocytes.

It is found in the cell membrane. Functionally, receptor for MSH (alpha, beta and gamma) and ACTH. The activity of this receptor is mediated by G proteins which activate adenylate cyclase. Mediates melanogenesis, the production of eumelanin (black/brown) and phaeomelanin (red/yellow), via regulation of cAMP signaling in melanocytes. The protein is Melanocyte-stimulating hormone receptor (MC1R) of Allenopithecus nigroviridis (Allen's swamp monkey).